Here is a 326-residue protein sequence, read N- to C-terminus: Immune-associated nucleotide-binding protein 4 (326 aa).

The AIG1-type G domain maps to 17 to 225 (EPIKNIVLVG…FTDEMHRKIQ (209 aa)). The G1 stretch occupies residues 26-33 (GRTGNGKS). GTP-binding positions include 26-34 (GRTGNGKSA) and serine 47. The G2 stretch occupies residues 53 to 57 (GVTMK). Residues 75-78 (DTPG) form a G3 region. The interval 145 to 148 (TGGD) is G4. The interval 184–186 (DNR) is G5. Position 185 (asparagine 185) interacts with GTP. Positions 217-241 (TDEMHRKIQKEAETLREQQKEVESK) form a coiled coil.

This sequence belongs to the TRAFAC class TrmE-Era-EngA-EngB-Septin-like GTPase superfamily. AIG1/Toc34/Toc159-like paraseptin GTPase family. IAN subfamily. In terms of tissue distribution, expressed in radicles of the germinating seeds.

The protein is Immune-associated nucleotide-binding protein 4 of Arabidopsis thaliana (Mouse-ear cress).